The chain runs to 278 residues: Tryptophan synthase alpha chain (278 aa).

Catalysis depends on proton acceptor residues glutamate 50 and aspartate 61.

The protein belongs to the TrpA family. As to quaternary structure, tetramer of two alpha and two beta chains.

It carries out the reaction (1S,2R)-1-C-(indol-3-yl)glycerol 3-phosphate + L-serine = D-glyceraldehyde 3-phosphate + L-tryptophan + H2O. It participates in amino-acid biosynthesis; L-tryptophan biosynthesis; L-tryptophan from chorismate: step 5/5. In terms of biological role, the alpha subunit is responsible for the aldol cleavage of indoleglycerol phosphate to indole and glyceraldehyde 3-phosphate. This is Tryptophan synthase alpha chain from Methylobacterium nodulans (strain LMG 21967 / CNCM I-2342 / ORS 2060).